Consider the following 102-residue polypeptide: YcgL domain-containing protein MS1047 (102 aa).

The YcgL domain maps to Met1–Lys85.

The polypeptide is YcgL domain-containing protein MS1047 (Mannheimia succiniciproducens (strain KCTC 0769BP / MBEL55E)).